Consider the following 664-residue polypeptide: Protein IQ-DOMAIN 28 (664 aa).

Residues 1–85 (MGKTPGKWIK…DESKDNLESR (85 aa)) are disordered. Positions 51-64 (VDPPVVSSQPVPAS) are enriched in low complexity. Residues 76–85 (DESKDNLESR) are compositionally biased toward basic and acidic residues. IQ domains lie at 93-121 (LEQA…GIIR), 122-140 (LQAV…ATYS), and 144-170 (GIVK…QKKH). The interval 106–116 (AHQARRAFRTL) is calmodulin-binding. 3 disordered regions span residues 244-488 (EIPK…KEKD), 502-573 (DEKS…SGRK), and 637-664 (AKGS…DWKR). The Nuclear localization signal 1 signature appears at 251 to 258 (KKRNYQAV). Basic and acidic residues predominate over residues 305 to 315 (DPLRNESDKAN). Residues 339–353 (SPSLKRSSLSNGSKK) are compositionally biased toward low complexity. Residues 351 to 358 (SKKATLRS) carry the Nuclear localization signal 2 motif. Composition is skewed to basic and acidic residues over residues 358–367 (SAEKKKKDIP), 427–447 (TEKE…KVLE), and 502–532 (DEKS…KCAD). The span at 536–547 (SSENGNVGSDNT) shows a compositional bias: polar residues. Basic and acidic residues predominate over residues 652 to 664 (DITHKSTRTDWKR).

The protein belongs to the IQD family. In terms of assembly, binds to multiple calmodulin (CaM) in the presence of Ca(2+) and CaM-like proteins.

It localises to the nucleus. The protein localises to the cytoplasm. Its subcellular location is the cytoskeleton. Its function is as follows. May be involved in cooperative interactions with calmodulins or calmodulin-like proteins. Recruits calmodulin proteins to microtubules, thus being a potential scaffold in cellular signaling and trafficking. May associate with nucleic acids and regulate gene expression at the transcriptional or post-transcriptional level. This Arabidopsis thaliana (Mouse-ear cress) protein is Protein IQ-DOMAIN 28.